A 202-amino-acid polypeptide reads, in one-letter code: Large ribosomal subunit protein uL4 (202 aa).

A disordered region spans residues 47–67 (KTKAEVSGGGVKPWKQKGTGR).

This sequence belongs to the universal ribosomal protein uL4 family. Part of the 50S ribosomal subunit.

One of the primary rRNA binding proteins, this protein initially binds near the 5'-end of the 23S rRNA. It is important during the early stages of 50S assembly. It makes multiple contacts with different domains of the 23S rRNA in the assembled 50S subunit and ribosome. In terms of biological role, forms part of the polypeptide exit tunnel. The chain is Large ribosomal subunit protein uL4 from Dichelobacter nodosus (strain VCS1703A).